The chain runs to 497 residues: Vacuolar fusion protein CCZ1 homolog B (497 aa).

Residues 244–284 (GTSSWSYLRKGSGSPQISSRSTTVPPLGSGGTLPSGNGSST) are disordered.

Belongs to the CCZ1 family. In terms of assembly, interacts with MON1.

The protein resides in the endosome. Its subcellular location is the prevacuolar compartment. Functionally, plays an important role in membrane trafficking through the secretory apparatus. In complex with MON1, acts as a guanine exchange factor (GEF) for RABG3F of the RAB7 protein family. Promotes the exchange of GDP to GTP, converting RABG3F from an inactive GDP-bound form into an active GTP-bound form. The RABG3F active form is involved in protein trafficking from prevacuolar compartments (PVCs) to vacuoles. May serve as a linker between Rab5 and Rab7 protein families in PVCs and mediate PVC maturation. The polypeptide is Vacuolar fusion protein CCZ1 homolog B (Arabidopsis thaliana (Mouse-ear cress)).